A 116-amino-acid chain; its full sequence is Cocaine- and amphetamine-regulated transcript protein (116 aa).

The N-terminal stretch at 1–27 is a signal peptide; the sequence is MESSRVRLLPLLGAALLLMLPLLGTRA. Tyr-41 bears the Phosphotyrosine mark. Residue Ser-48 is modified to Phosphoserine. 3 cysteine pairs are disulfide-bonded: Cys-82/Cys-100, Cys-88/Cys-108, and Cys-102/Cys-115.

Belongs to the CART family. In terms of tissue distribution, hypothalamus. Found in neurons of the ventrolateral part of the arcuate nucleus, in the external zone of the median eminence, and also found in terminals in the periventricular part of the paraventricular nucleus.

It localises to the secreted. In terms of biological role, satiety factor closely associated with the actions of leptin and neuropeptide Y; this anorectic peptide inhibits both normal and starvation-induced feeding and completely blocks the feeding response induced by neuropeptide Y and regulated by leptin in the hypothalamus. It promotes neuronal development and survival in vitro. The chain is Cocaine- and amphetamine-regulated transcript protein (CARTPT) from Homo sapiens (Human).